Here is a 312-residue protein sequence, read N- to C-terminus: Pectinesterase inhibitor 10 (312 aa).

Positions 1–25 are cleaved as a signal peptide; it reads MNILSQTQILHLSIAILLFITTSSS. Low complexity-rich tracts occupy residues 24 to 36 and 44 to 55; these read SSSLSPSSSSPSL and SPSSAPPSSLSP. Residues 24 to 141 form a disordered region; that stretch reads SSSLSPSSSS…PSSSSSTYSN (118 aa). A compositionally biased stretch (pro residues) spans 56 to 75; sequence SSPPPLSLSPSSPPPPPPSS. 2 stretches are compositionally biased toward low complexity: residues 76 to 85 and 93 to 104; these read SPLSSLSPSL and SPSSAPPSSLSP. Residues 105-124 are compositionally biased toward pro residues; the sequence is SSPPPLSLSPSSPPPPPPSS. Residues 125–137 are compositionally biased toward low complexity; that stretch reads SPLSSLSPSSSSS. Residues Asn141, Asn153, Asn185, and Asn200 are each glycosylated (N-linked (GlcNAc...) asparagine). Cysteines 152 and 161 form a disulfide. Cys218 and Cys268 form a disulfide bridge.

Belongs to the PMEI family.

It is found in the secreted. The protein localises to the extracellular space. It localises to the apoplast. Functionally, pectin methylesterase (PME) inhibitor involved in the maintenance of cell wall integrity in response to necrotrophic pathogens. Modulates PME activity and pectin methylesterification during infection by Botrytis cinerea and contributes to resistance against the pathogen. The polypeptide is Pectinesterase inhibitor 10 (Arabidopsis thaliana (Mouse-ear cress)).